We begin with the raw amino-acid sequence, 545 residues long: Chaperonin GroEL (545 aa).

Residues T29–P32, K50, D86–T90, G414, N480–A482, and D496 each bind ATP.

This sequence belongs to the chaperonin (HSP60) family. In terms of assembly, forms a cylinder of 14 subunits composed of two heptameric rings stacked back-to-back. Interacts with the co-chaperonin GroES.

The protein localises to the cytoplasm. It carries out the reaction ATP + H2O + a folded polypeptide = ADP + phosphate + an unfolded polypeptide.. In terms of biological role, together with its co-chaperonin GroES, plays an essential role in assisting protein folding. The GroEL-GroES system forms a nano-cage that allows encapsulation of the non-native substrate proteins and provides a physical environment optimized to promote and accelerate protein folding. The sequence is that of Chaperonin GroEL from Malacoplasma penetrans (strain HF-2) (Mycoplasma penetrans).